Here is a 152-residue protein sequence, read N- to C-terminus: UPF0179 protein HQ_3004A (152 aa).

It belongs to the UPF0179 family.

The sequence is that of UPF0179 protein HQ_3004A from Haloquadratum walsbyi (strain DSM 16790 / HBSQ001).